The primary structure comprises 680 residues: MIDRYKHQQLRIGSVSPQQISAWATKIIPNGEIVGEVTKPYTFHYKTNKPEKDGLFCERIFGPIKSGICACGNYRVIGDEKEDPKFCEQCGVEFVGSRIRRYQMGYIKLTCPVTHVWYLKRLPSYIANLLDKPLKELESLVYCDFSFARPITKKPTFLRLRGSFEYEIQSWKYSIPLFFTTQGFDIFRNREISTGAGAIREQLADLDLRIIIENSLVEWKLLGEEGPTGNEWEDRKIVRRKDFLVRRMELAKHFIRTNIEPEWMVLCLLPVLPPELRPIIQIEGGKLMSSDINELYRRVIYRNNTLTDLLTTSRSTPGELVMCQEKLVQEAVDTLLDNGIRGQPMKDGHNKVYKSFSDVIEGKEGRFRETLLGKRVDYSGRSVIVVGPSLSLHRCGLPREIAIELFQTFVIRGLIRQHLASNIGVAKSQIRENKPIVWEILQEVMQGHPVLLNRAPTLHRLGIQSFQPILVEGRTICLHPLVCKGFNADFDGDQMAVHVPLSLEAQAEARLLMFSHMNLLSPAIGDPISVPTQDMLIGLYVLTSATRRGICANRYNPCNRKNYQNERIYETNYKYMKEPFFCNSYDAIGAYWQKRINLDSPLWLRWQLDQRVSASREVPIEVHYESFGTYHEIYAHYLIVRSVKKETFCVYIRTTVGHISFYREIEEAIQGFSQACSYDT.

Zn(2+) contacts are provided by Cys69, Cys71, Cys87, and Cys90. Mg(2+) is bound by residues Asp489, Asp491, and Asp493.

The protein belongs to the RNA polymerase beta' chain family. RpoC1 subfamily. As to quaternary structure, in plastids the minimal PEP RNA polymerase catalytic core is composed of four subunits: alpha, beta, beta', and beta''. When a (nuclear-encoded) sigma factor is associated with the core the holoenzyme is formed, which can initiate transcription. Mg(2+) serves as cofactor. Zn(2+) is required as a cofactor.

Its subcellular location is the plastid. It is found in the chloroplast. The enzyme catalyses RNA(n) + a ribonucleoside 5'-triphosphate = RNA(n+1) + diphosphate. Its function is as follows. DNA-dependent RNA polymerase catalyzes the transcription of DNA into RNA using the four ribonucleoside triphosphates as substrates. This is DNA-directed RNA polymerase subunit beta' from Aethionema grandiflorum (Persian stone-cress).